The following is a 654-amino-acid chain: Tetratricopeptide repeat protein 30 homolog (654 aa).

TPR repeat units lie at residues aspartate 10–arginine 43, alanine 44–valine 76, alanine 145–asparagine 178, histidine 180–asparagine 212, cysteine 393–isoleucine 426, serine 452–aspartate 485, and cysteine 535–alanine 568.

Belongs to the TTC30/dfy-1/fleer family.

The protein resides in the cell projection. It is found in the cilium. In terms of biological role, required for polyglutamylation of axonemal tubulin in sensory cilia. Plays a role in anterograde intraflagellar transport (IFT), the process by which cilia precursors are transported from the base of the cilium to the site of their incorporation at the tip. This Anopheles gambiae (African malaria mosquito) protein is Tetratricopeptide repeat protein 30 homolog.